Here is a 311-residue protein sequence, read N- to C-terminus: Mitoferrin (311 aa).

Solcar repeat units lie at residues 15–102, 111–195, and 202–302; these read HSIP…MKSF, EHTL…WQQV, and YDPK…FKFM. 6 consecutive transmembrane segments (helical) span residues 17–36, 77–96, 112–132, 170–189, 204–223, and 277–296; these read IPVHLAAGALAGAVEHCVMF, GVNAVAAGSMPAHALYFTVY, HTLAYGASGVVATLIHDAVMN, SYTTQLAMNVPFQAIHFMGY, PKSHLIAGGLAGGLAAAVTT, and GLQARVIFQVPATALSWSVY.

This sequence belongs to the mitochondrial carrier (TC 2.A.29) family.

It is found in the mitochondrion inner membrane. Mitochondrial iron transporter that mediates iron uptake. Probably required for heme synthesis of hemoproteins and Fe-S cluster assembly. This Caenorhabditis briggsae protein is Mitoferrin.